Here is a 175-residue protein sequence, read N- to C-terminus: Orotate phosphoribosyltransferase (175 aa).

5-phospho-alpha-D-ribose 1-diphosphate is bound by residues arginine 89, lysine 90, lysine 93, and 115–123 (EDIATTGQS). Orotate is bound by residues threonine 119 and arginine 147.

It belongs to the purine/pyrimidine phosphoribosyltransferase family. PyrE subfamily. As to quaternary structure, homodimer. Mg(2+) is required as a cofactor.

The catalysed reaction is orotidine 5'-phosphate + diphosphate = orotate + 5-phospho-alpha-D-ribose 1-diphosphate. Its pathway is pyrimidine metabolism; UMP biosynthesis via de novo pathway; UMP from orotate: step 1/2. Catalyzes the transfer of a ribosyl phosphate group from 5-phosphoribose 1-diphosphate to orotate, leading to the formation of orotidine monophosphate (OMP). The chain is Orotate phosphoribosyltransferase from Halobacterium salinarum (strain ATCC 700922 / JCM 11081 / NRC-1) (Halobacterium halobium).